Here is a 386-residue protein sequence, read N- to C-terminus: Chaperone protein DnaJ (386 aa).

The J domain maps to 5–70 (DYYEVLGVER…QKRAAYDRYG (66 aa)). A CR-type zinc finger spans residues 138–216 (GKDETIHVPQ…CGGHGQVKEE (79 aa)). 8 residues coordinate Zn(2+): C151, C154, C168, C171, C190, C193, C204, and C207. CXXCXGXG motif repeat units lie at residues 151-158 (CRPCEGTG), 168-175 (CETCGGHG), 190-197 (CHICQGRG), and 204-211 (CKTCGGHG).

The protein belongs to the DnaJ family. Homodimer. Zn(2+) is required as a cofactor.

The protein localises to the cytoplasm. Functionally, participates actively in the response to hyperosmotic and heat shock by preventing the aggregation of stress-denatured proteins and by disaggregating proteins, also in an autonomous, DnaK-independent fashion. Unfolded proteins bind initially to DnaJ; upon interaction with the DnaJ-bound protein, DnaK hydrolyzes its bound ATP, resulting in the formation of a stable complex. GrpE releases ADP from DnaK; ATP binding to DnaK triggers the release of the substrate protein, thus completing the reaction cycle. Several rounds of ATP-dependent interactions between DnaJ, DnaK and GrpE are required for fully efficient folding. Also involved, together with DnaK and GrpE, in the DNA replication of plasmids through activation of initiation proteins. This Hyphomonas neptunium (strain ATCC 15444) protein is Chaperone protein DnaJ.